Here is a 77-residue protein sequence, read N- to C-terminus: Acyl carrier protein (77 aa).

Residues 2-77 (SDVADRVKKI…DAVKFISEAS (76 aa)) form the Carrier domain. Ser37 carries the post-translational modification O-(pantetheine 4'-phosphoryl)serine.

The protein belongs to the acyl carrier protein (ACP) family. Post-translationally, 4'-phosphopantetheine is transferred from CoA to a specific serine of apo-ACP by AcpS. This modification is essential for activity because fatty acids are bound in thioester linkage to the sulfhydryl of the prosthetic group.

The protein resides in the cytoplasm. The protein operates within lipid metabolism; fatty acid biosynthesis. In terms of biological role, carrier of the growing fatty acid chain in fatty acid biosynthesis. The protein is Acyl carrier protein of Ruegeria pomeroyi (strain ATCC 700808 / DSM 15171 / DSS-3) (Silicibacter pomeroyi).